We begin with the raw amino-acid sequence, 311 residues long: Ribonuclease HIII (311 aa).

The 217-residue stretch at 95 to 311 folds into the RNase H type-2 domain; sequence MSIVGSDEVG…NTEKAFRLLK (217 aa). Positions 101, 102, and 206 each coordinate a divalent metal cation.

This sequence belongs to the RNase HII family. RnhC subfamily. Mn(2+) is required as a cofactor. It depends on Mg(2+) as a cofactor.

It is found in the cytoplasm. The catalysed reaction is Endonucleolytic cleavage to 5'-phosphomonoester.. Its function is as follows. Endonuclease that specifically degrades the RNA of RNA-DNA hybrids. The sequence is that of Ribonuclease HIII from Bacillus cereus (strain AH187).